A 263-amino-acid polypeptide reads, in one-letter code: Endonuclease 8 (263 aa).

Proline 2 serves as the catalytic Schiff-base intermediate with DNA. Glutamate 3 serves as the catalytic Proton donor. Residue lysine 53 is the Proton donor; for beta-elimination activity of the active site. Positions 70, 125, and 169 each coordinate DNA. The FPG-type zinc-finger motif lies at 229–263 (KVFHRDGEPCERCGSIIEKTTLSSRPFYWCPGCQH). Arginine 253 (proton donor; for delta-elimination activity) is an active-site residue.

Belongs to the FPG family. Zn(2+) is required as a cofactor.

It carries out the reaction 2'-deoxyribonucleotide-(2'-deoxyribose 5'-phosphate)-2'-deoxyribonucleotide-DNA = a 3'-end 2'-deoxyribonucleotide-(2,3-dehydro-2,3-deoxyribose 5'-phosphate)-DNA + a 5'-end 5'-phospho-2'-deoxyribonucleoside-DNA + H(+). In terms of biological role, involved in base excision repair of DNA damaged by oxidation or by mutagenic agents. Acts as a DNA glycosylase that recognizes and removes damaged bases. Has a preference for oxidized pyrimidines, such as thymine glycol, 5,6-dihydrouracil and 5,6-dihydrothymine. Has AP (apurinic/apyrimidinic) lyase activity and introduces nicks in the DNA strand. Cleaves the DNA backbone by beta-delta elimination to generate a single-strand break at the site of the removed base with both 3'- and 5'-phosphates. This is Endonuclease 8 from Escherichia coli O9:H4 (strain HS).